The chain runs to 119 residues: Large ribosomal subunit protein bL20 (119 aa).

Belongs to the bacterial ribosomal protein bL20 family.

In terms of biological role, binds directly to 23S ribosomal RNA and is necessary for the in vitro assembly process of the 50S ribosomal subunit. It is not involved in the protein synthesizing functions of that subunit. This Streptococcus uberis (strain ATCC BAA-854 / 0140J) protein is Large ribosomal subunit protein bL20.